The sequence spans 479 residues: Type I inositol polyphosphate 5-phosphatase 8 (479 aa).

2 catalytic regions span residues 300–315 and 379–394; these read DKVI…LRAS and KRRT…WKGD.

It belongs to the inositol polyphosphate 5-phosphatase family.

This Arabidopsis thaliana (Mouse-ear cress) protein is Type I inositol polyphosphate 5-phosphatase 8.